The following is a 450-amino-acid chain: Phosphoglucosamine mutase (450 aa).

The Phosphoserine intermediate role is filled by serine 101. The Mg(2+) site is built by serine 101, aspartate 240, aspartate 242, and aspartate 244. A Phosphoserine modification is found at serine 101.

This sequence belongs to the phosphohexose mutase family. Mg(2+) is required as a cofactor. Activated by phosphorylation.

It carries out the reaction alpha-D-glucosamine 1-phosphate = D-glucosamine 6-phosphate. Functionally, catalyzes the conversion of glucosamine-6-phosphate to glucosamine-1-phosphate. In Streptococcus thermophilus (strain CNRZ 1066), this protein is Phosphoglucosamine mutase.